The primary structure comprises 586 residues: ATPase family AAA domain-containing protein 3 (586 aa).

The disordered stretch occupies residues 1 to 52 (MSWLFGIKGSKGEGTGPPLPLPPVQPGGEGSGDGGAGDRPGPKDKWSNFDPT). S2 is modified (N-acetylserine). A required for interaction with the inner surface of the mitochondrial outer membrane region spans residues 2–49 (SWLFGIKGSKGEGTGPPLPLPPVQPGGEGSGDGGAGDRPGPKDKWSNF). Residues 2 to 245 (SWLFGIKGSK…FRAFVTDWDK (244 aa)) lie on the Mitochondrial intermembrane side of the membrane. Residues 27–38 (GGEGSGDGGAGD) are compositionally biased toward gly residues. A coiled-coil region spans residues 55–218 (ERAAKAAREL…QIRLKAAEHR (164 aa)). A helical transmembrane segment spans residues 246-262 (VTATVAGLTLLAVGIYS). Over 263 to 586 (AKNATSVAGR…QPPTLRTQAE (324 aa)) the chain is Mitochondrial matrix. The tract at residues 289–304 (RITVLEALRHPIQVSR) is S100B-binding. 351-358 (GPPGTGKT) is an ATP binding site. K490 carries the post-translational modification N6-acetyllysine; alternate. K490 is modified (N6-succinyllysine; alternate). K494 and K512 each carry N6-acetyllysine.

The protein belongs to the AAA ATPase family. Can form homooligomers. Homodimer formation at the N-terminus may be regulated by ATP and is required for the interaction with the inner surface of the mitochondrial outer membrane and correct mitochondrial homeostasis. Interacts with components of the mitochondrial ribosome and with other proteins involved in mitochondrial RNA metabolism. May also interact with protein involved in lipid metabolism, including STARD9. May interact with FAM210A. Interacts with GADD45GIP1. Interacts with S100B in a Ca(+2)- and Zn(+2)-dependent manner; this interaction probably occurs in the cytosol prior to mitochondrial targeting. S100B could assist ATAD3A cytoplasmic processing, preventing aggregation and favoring mitochondrial localization. Interacts with HSP60/HSPD1. Forms heterooligomers with ATAD3B; this interaction may affect ATAD3A activity. Interacts with CLPB.

The protein localises to the mitochondrion inner membrane. It localises to the mitochondrion matrix. The protein resides in the mitochondrion nucleoid. Its function is as follows. Essential for mitochondrial network organization, mitochondrial metabolism and cell growth at organism and cellular level. May play an important role in mitochondrial protein synthesis. May also participate in mitochondrial DNA replication. May bind to mitochondrial DNA D-loops and contribute to nucleoid stability. Required for enhanced channeling of cholesterol for hormone-dependent steroidogenesis. Involved in mitochondrial-mediated antiviral innate immunity. Also involved in the mitochondrial DNA damage response by promoting signaling between damaged genomes and the mitochondrial membrane, leading to activation of the integrated stress response (ISR). The chain is ATPase family AAA domain-containing protein 3 (ATAD3) from Bos taurus (Bovine).